A 309-amino-acid polypeptide reads, in one-letter code: Probable manganese-dependent inorganic pyrophosphatase (309 aa).

Mn(2+) contacts are provided by H9, D13, D15, D75, H97, and D149.

The protein belongs to the PPase class C family. Requires Mn(2+) as cofactor.

The protein resides in the cytoplasm. It carries out the reaction diphosphate + H2O = 2 phosphate + H(+). This is Probable manganese-dependent inorganic pyrophosphatase from Bacillus anthracis (strain CDC 684 / NRRL 3495).